The sequence spans 384 residues: Mannitol-1-phosphate 5-dehydrogenase (384 aa).

3–14 (ALHFGAGNIGRG) contributes to the NAD(+) binding site.

The protein belongs to the mannitol dehydrogenase family.

It catalyses the reaction D-mannitol 1-phosphate + NAD(+) = beta-D-fructose 6-phosphate + NADH + H(+). This chain is Mannitol-1-phosphate 5-dehydrogenase (mtlD), found in Clostridium acetobutylicum (strain ATCC 824 / DSM 792 / JCM 1419 / IAM 19013 / LMG 5710 / NBRC 13948 / NRRL B-527 / VKM B-1787 / 2291 / W).